Reading from the N-terminus, the 275-residue chain is Integrase homolog (275 aa).

Residues 88–111 (RVSQDRQAQGRERRSVLLPQERRG) show a composition bias toward basic and acidic residues. Residues 88-120 (RVSQDRQAQGRERRSVLLPQERRGSSGRQPLYS) form a disordered region.

The protein belongs to the 'phage' integrase family.

Integrase-recombinase proteins are responsible for catalyzing strand exchange between DNA molecules and play an important role in the DNA replication. Its function is as follows. May be required for the formation of concatameric complex replicative intermediates and/or their resolution before encapsidation. The chain is Integrase homolog (INT) from Dryophytes versicolor (chameleon treefrog).